A 206-amino-acid polypeptide reads, in one-letter code: Glycerol-3-phosphate acyltransferase (206 aa).

Transmembrane regions (helical) follow at residues 14–34 (IALAAAVIGYLFGSIPFGLIL), 67–87 (ATLLLDALKASAAAWIVGYFL), 91–111 (AAIIAGFFAFIGHLFPVWIGF), 124–144 (LLGVAPIMVVLFAAVWLAVAF), and 148–168 (YSSLSALVAMLVIPVALLILG).

This sequence belongs to the PlsY family. In terms of assembly, probably interacts with PlsX.

It is found in the cell inner membrane. It carries out the reaction an acyl phosphate + sn-glycerol 3-phosphate = a 1-acyl-sn-glycero-3-phosphate + phosphate. It functions in the pathway lipid metabolism; phospholipid metabolism. Its function is as follows. Catalyzes the transfer of an acyl group from acyl-phosphate (acyl-PO(4)) to glycerol-3-phosphate (G3P) to form lysophosphatidic acid (LPA). This enzyme utilizes acyl-phosphate as fatty acyl donor, but not acyl-CoA or acyl-ACP. The chain is Glycerol-3-phosphate acyltransferase from Rhizobium etli (strain CIAT 652).